We begin with the raw amino-acid sequence, 496 residues long: Ribose import ATP-binding protein RbsA (496 aa).

2 ABC transporter domains span residues 3–239 (IVME…VGRE) and 246–493 (ERTP…TGGN). 35–42 (GENGAGKS) provides a ligand contact to ATP.

Belongs to the ABC transporter superfamily. Ribose importer (TC 3.A.1.2.1) family. In terms of assembly, the complex is composed of an ATP-binding protein (RbsA), two transmembrane proteins (RbsC) and a solute-binding protein (RbsB).

The protein resides in the cell membrane. It carries out the reaction D-ribose(out) + ATP + H2O = D-ribose(in) + ADP + phosphate + H(+). Functionally, part of the ABC transporter complex RbsABC involved in ribose import. Responsible for energy coupling to the transport system. This Oceanobacillus iheyensis (strain DSM 14371 / CIP 107618 / JCM 11309 / KCTC 3954 / HTE831) protein is Ribose import ATP-binding protein RbsA.